Consider the following 409-residue polypeptide: WW domain-containing oxidoreductase (409 aa).

The segment at 1–23 (MIALPDTDSEDELPPGWEERATD) is disordered. 2 WW domains span residues 11-44 (DELP…HPRT) and 52-86 (GELP…DPRL). 128–134 (GANCGIG) contacts NADP(+). Ser257 is a substrate binding site. Residue Tyr288 is the Proton acceptor of the active site.

Belongs to the short-chain dehydrogenases/reductases (SDR) family.

The protein localises to the cytoplasm. It localises to the mitochondrion. The protein resides in the golgi apparatus. It is found in the lysosome. Its function is as follows. Putative oxidoreductase. May control genotoxic stress-induced cell death. May play a role in TGFB1 signaling and TGFB1-mediated cell death. May also play a role in tumor necrosis factor (TNF)-mediated cell death. May play a role in Wnt signaling. In Drosophila melanogaster (Fruit fly), this protein is WW domain-containing oxidoreductase (Wwox).